The chain runs to 335 residues: [Citrate [pro-3S]-lyase] ligase (335 aa).

Positions 1–131 constitute an N-acetyltransferase domain; sequence MQFERISTEQ…SATRLQKQCS (131 aa).

It catalyses the reaction holo-[citrate lyase ACP] + acetate + ATP = acetyl-[citrate lyase ACP] + AMP + diphosphate. Functionally, acetylation of prosthetic group (2-(5''-phosphoribosyl)-3'-dephosphocoenzyme-A) of the gamma subunit of citrate lyase. In Haemophilus influenzae (strain ATCC 51907 / DSM 11121 / KW20 / Rd), this protein is [Citrate [pro-3S]-lyase] ligase (citC).